The sequence spans 187 residues: MPHSTADRRLRLTRQALLAAAVVPLLAGCALVMHKPHSAGSSNPWDDSAHPLTDDQAMAQVVEPAKQIVAAADLQAVRAGFSFTSCNDQGDPPYQGTVRMAFLLQGDHDAYFQHVRAAMLSHGWIDGPPPGQYFHGITLHKNGVTANMSLALDHSYGEMILDGECRNTTDHHHDDETTNITNQLVQP.

An N-terminal signal peptide occupies residues 1 to 28 (MPHSTADRRLRLTRQALLAAAVVPLLAG). A lipid anchor (N-palmitoyl cysteine) is attached at cysteine 29. Cysteine 29 carries the S-diacylglycerol cysteine lipid modification.

The protein localises to the cell membrane. The polypeptide is Putative lipoprotein LppJ (lppJ) (Mycobacterium tuberculosis (strain CDC 1551 / Oshkosh)).